Reading from the N-terminus, the 123-residue chain is Protein Wnt-3a (123 aa).

A lipid anchor (O-palmitoleoyl serine) is attached at Ser1. An intrachain disulfide couples Cys89 to Cys104. Asn90 carries an N-linked (GlcNAc...) asparagine glycan.

This sequence belongs to the Wnt family. Post-translationally, disulfide bonds have critical and distinct roles in secretion and activity. Loss of each conserved cysteine results in high molecular weight oxidized Wnt oligomers, which are formed through inter-Wnt disulfide bonding. Palmitoleoylation is required for efficient binding to frizzled receptors. Depalmitoleoylation leads to Wnt signaling pathway inhibition.

The protein localises to the secreted. It is found in the extracellular space. It localises to the extracellular matrix. Functionally, ligand for members of the frizzled family of seven transmembrane receptors. Functions in the canonical Wnt signaling pathway that results in activation of transcription factors of the TCF/LEF family. Required for normal embryonic mesoderm development and formation of caudal somites. Required for normal morphogenesis of the developing neural tube. The polypeptide is Protein Wnt-3a (WNT-3A) (Plethodon jordani (Red-cheeked salamander)).